The sequence spans 183 residues: Probable apo-citrate lyase phosphoribosyl-dephospho-CoA transferase (183 aa).

The protein belongs to the CitX family.

The catalysed reaction is apo-[citrate lyase ACP] + 2'-(5''-triphospho-alpha-D-ribosyl)-3'-dephospho-CoA = holo-[citrate lyase ACP] + diphosphate. Transfers 2-(5''-triphosphoribosyl)-3'-dephosphocoenzyme-A on a serine residue to the apo-acyl carrier protein (gamma chain) of the citrate lyase to yield holo-acyl carrier protein. This chain is Probable apo-citrate lyase phosphoribosyl-dephospho-CoA transferase, found in Escherichia coli (strain 55989 / EAEC).